A 317-amino-acid polypeptide reads, in one-letter code: MWLYLLALVGLWNLLRLFRERKVVSHLQDKYVFITGCDSGFGNLLARQLDRRGMRVLAACLTEKGAEQLRSKTSDRLETVILDVTKTESIVAATQWVKERVGNTGLWGLVNNAGISGHLGPNEWMNKQNIASVLDVNLLGMIEVTLSTVPLVRKARGRVVNVASIAGRLSFCGGGYCISKYGVEAFSDSLRRELSYFGVKVAIVEPGFFRTDVTNGVTLSSNFQMLWDQTSSEVREVYGENYLASYLKMLNGLDQRCNKDLSLVTDCMEHALTSCHPRTRYSAGWDAKFFYLPMSYLPTFLVDALFYWTSPKPEKAL.

33–57 (FITGCDSGFGNLLARQLDRRGMRVL) provides a ligand contact to NAD(+). Residue S164 participates in substrate binding. The Proton acceptor role is filled by Y176. Residues 289 to 308 (FFYLPMSYLPTFLVDALFYW) traverse the membrane as a helical segment.

The protein belongs to the short-chain dehydrogenases/reductases (SDR) family. Homodimer. In terms of processing, not N-glycosylated. Liver &gt; kidney &gt; brain &gt; lung &gt; testis.

The protein resides in the microsome membrane. It is found in the endoplasmic reticulum membrane. It catalyses the reaction all-trans-retinol--[retinol-binding protein] + NAD(+) = all-trans-retinal--[retinol-binding protein] + NADH + H(+). The enzyme catalyses all-trans-retinol + NAD(+) = all-trans-retinal + NADH + H(+). It carries out the reaction 13-cis-retinol + NAD(+) = 13-cis-retinal + NADH + H(+). The catalysed reaction is 11-cis-retinol + NAD(+) = 11-cis-retinal + NADH + H(+). It catalyses the reaction 9-cis-retinol + NAD(+) = 9-cis-retinal + NADH + H(+). The enzyme catalyses 5alpha-androstane-3alpha,17beta-diol + NAD(+) = 17beta-hydroxy-5alpha-androstan-3-one + NADH + H(+). It carries out the reaction androsterone + NAD(+) = 5alpha-androstan-3,17-dione + NADH + H(+). It participates in cofactor metabolism; retinol metabolism. Functionally, oxidoreductase with a preference for NAD. Oxidizes all-trans-retinol, 9-cis-retinol, 11-cis-retinol and 13-cis-retinol to the corresponding aldehydes. Has higher activity towards CRBP-bound retinol than with free retinol. Oxidizes 3-alpha-hydroxysteroids. Oxidizes androstanediol and androsterone to dihydrotestosterone and androstanedione. Can also catalyze the reverse reaction. This Rattus norvegicus (Rat) protein is Retinol dehydrogenase 16.